A 134-amino-acid polypeptide reads, in one-letter code: Small ribosomal subunit protein bS6 (134 aa).

The disordered stretch occupies residues E99–G134. Basic and acidic residues predominate over residues Q105–G134.

It belongs to the bacterial ribosomal protein bS6 family.

Binds together with bS18 to 16S ribosomal RNA. This chain is Small ribosomal subunit protein bS6, found in Methylobacterium sp. (strain 4-46).